Here is a 158-residue protein sequence, read N- to C-terminus: Transcription elongation factor GreA (158 aa).

This sequence belongs to the GreA/GreB family.

Necessary for efficient RNA polymerase transcription elongation past template-encoded arresting sites. The arresting sites in DNA have the property of trapping a certain fraction of elongating RNA polymerases that pass through, resulting in locked ternary complexes. Cleavage of the nascent transcript by cleavage factors such as GreA or GreB allows the resumption of elongation from the new 3'terminus. GreA releases sequences of 2 to 3 nucleotides. This is Transcription elongation factor GreA from Wigglesworthia glossinidia brevipalpis.